A 157-amino-acid chain; its full sequence is MAEKGQKSLAVNKKARFDYLIEDTFEAGMVLVGTEVKSIRQGKINIKEGYARIENSEIYLHNVHISPYEQGNIFNKDPLRIRKLLLHKAEIRKLIGYVQQKGYTLVPMKVYLQNGLVKLQLGVGVGKKLHDKRQDMAKKDSQRRIQKELGQRQKGME.

The interval histidine 130–glutamate 157 is disordered. Basic and acidic residues predominate over residues lysine 132–glutamate 157.

The protein belongs to the SmpB family.

It is found in the cytoplasm. Required for rescue of stalled ribosomes mediated by trans-translation. Binds to transfer-messenger RNA (tmRNA), required for stable association of tmRNA with ribosomes. tmRNA and SmpB together mimic tRNA shape, replacing the anticodon stem-loop with SmpB. tmRNA is encoded by the ssrA gene; the 2 termini fold to resemble tRNA(Ala) and it encodes a 'tag peptide', a short internal open reading frame. During trans-translation Ala-aminoacylated tmRNA acts like a tRNA, entering the A-site of stalled ribosomes, displacing the stalled mRNA. The ribosome then switches to translate the ORF on the tmRNA; the nascent peptide is terminated with the 'tag peptide' encoded by the tmRNA and targeted for degradation. The ribosome is freed to recommence translation, which seems to be the essential function of trans-translation. The protein is SsrA-binding protein of Alkaliphilus metalliredigens (strain QYMF).